Consider the following 148-residue polypeptide: Large ribosomal subunit protein bL9 (148 aa).

The protein belongs to the bacterial ribosomal protein bL9 family.

Its function is as follows. Binds to the 23S rRNA. This chain is Large ribosomal subunit protein bL9, found in Bacillus cereus (strain B4264).